A 275-amino-acid polypeptide reads, in one-letter code: Putative replication protein (275 aa).

The BRCT domain occupies 98–198; that stretch reads SKAICFTPYD…RILKISEDYF (101 aa).

The protein is Putative replication protein of Wigglesworthia glossinidia brevipalpis.